A 183-amino-acid chain; its full sequence is Helofensin-2 (183 aa).

The signal sequence occupies residues 1–26; it reads MQMDWLFIAVISGIGLLSSGVPGTQG. The C(6)C(4)C(9)C(6)CC 1; approximate repeat unit spans residues 27 to 64; sequence AYTTEQCRALNGSCNFYACFPKNVIIGKCDWWGWSCCA. One copy of the C(6)C(4)C(9)C(6)CC 2; approximate repeat lies at 65–101; the sequence is RTPLERCTAKKGTCTKTGCTKTDTDHGPCDGGAQCCQ. A C(6)C(4)C(9)C(6)CC 3; approximate repeat occupies 102-139; it reads RDPVKYCKFHGNVCGRGKCPMDHIPIGEQCMPGYPCCK. The C(6)C(4)C(9)C(6)CC 4; approximate repeat unit spans residues 140 to 177; that stretch reads RDGPAYCKSKGGKCLRRCSQIVPTDIIGVCADGVPCCK.

The protein belongs to the beta-defensin family. Helofensin subfamily. Expressed by the mandibular venom gland.

The protein localises to the secreted. Functionally, lethal toxin which possesses an inhibitory effect on direct electrical stimulation of the isolated hemi-diaphragm of mice. Neither hemorrhagic nor hemolytic activities are detected. Phospholipase A2 activity, proteolytic activity and arginine esterolytic activity are absent. The protein is Helofensin-2 of Heloderma suspectum cinctum (Banded Gila monster).